Reading from the N-terminus, the 109-residue chain is Putative double-stranded DNA mimic protein CKO_01325 (109 aa).

The protein belongs to the putative dsDNA mimic protein family.

In terms of biological role, may act as a double-stranded DNA (dsDNA) mimic. Probably regulates the activity of a dsDNA-binding protein. This is Putative double-stranded DNA mimic protein CKO_01325 from Citrobacter koseri (strain ATCC BAA-895 / CDC 4225-83 / SGSC4696).